Consider the following 448-residue polypeptide: Leukocyte immunoglobulin-like receptor subfamily B member 4 (448 aa).

A signal peptide spans 1-21 (MIPTFTALLCLGLSLGPRTHM). At 22–259 (QAGPLPKPTL…PHSGLRRHWE (238 aa)) the chain is on the extracellular side. Ig-like C2-type domains lie at 27-118 (PKPT…LVMT) and 124-218 (PTLS…LIVS). 2 disulfides stabilise this stretch: C49/C98 and C144/C195. The segment at 217-248 (VSGSLEDPRPSPTRSVSTAAGPEDQPLMPTGS) is disordered. Residues 260 to 280 (VLIGVLVVSILLLSLLLFLLL) traverse the membrane as a helical segment. Residues 281-448 (QHWRQGKHRT…PSVYATLAIH (168 aa)) lie on the Cytoplasmic side of the membrane. The segment at 297 to 448 (DFQRPPGAAE…PSVYATLAIH (152 aa)) is disordered. At S319 the chain carries Phosphoserine. Basic and acidic residues predominate over residues 344–354 (MDTRQSPHDED). Residues 358 to 363 (VTYAKV) carry the ITIM motif 1 motif. Over residues 384-398 (LDTKDRQAEEDRQMD) the composition is skewed to basic and acidic residues. 2 consecutive short sequence motifs (ITIM motif) follow at residues 410-415 (VTYAQL) and 440-445 (SVYATL).

Interacts with PTPN6. In terms of tissue distribution, detected on monocytes, macrophages, dendritic cells, natural killer cells and B-cells (at protein level). Expressed in the lung.

Its subcellular location is the cell membrane. In terms of biological role, inhibitory receptor involved in the down-regulation of the immune response and the development of immune tolerance. Receptor for FN1. Receptor for apolipoprotein APOE. Receptor for ALCAM/CD166. Inhibits receptor-mediated phosphorylation of cellular proteins and mobilization of intracellular calcium ions. Inhibits FCGR1A/CD64-mediated monocyte activation by inducing phosphatase-mediated down-regulation of the phosphorylation of multiple proteins including LCK, SYK, LAT and ERK, leading to a reduction in TNF production. This inhibition of monocyte activation occurs at least in part via binding to FN1. Inhibits T cell proliferation, inducing anergy, suppressing the differentiation of IFNG-producing CD8+ cytotoxic T cells and enhancing the generation of CD8+ T suppressor cells. Induces up-regulation of CD86 on dendritic cells. Interferes with TNFRSF5-signaling and NF-kappa-B up-regulation. The sequence is that of Leukocyte immunoglobulin-like receptor subfamily B member 4 (LILRB4) from Homo sapiens (Human).